Consider the following 825-residue polypeptide: Thioredoxin domain-containing protein 16 (825 aa).

The N-terminal stretch at 1-27 is a signal peptide; it reads MFSGFNVFRVGISFVIMCIFYMPTVNS. Residues 392-495 enclose the Thioredoxin domain; sequence LTVELTEETF…EDLLKFIQLN (104 aa). Cys-449 and Cys-456 are disulfide-bonded. Asn-460 carries an N-linked (GlcNAc...) asparagine glycan. Positions 762 to 787 are disordered; sequence RKVPKCMKETDVQENDKEQHEDKSAV. Residues 767–787 are compositionally biased toward basic and acidic residues; that stretch reads CMKETDVQENDKEQHEDKSAV. The short motif at 816–819 is the Mediates endoplasmic reticulum retention element; that stretch reads DKEL.

Interacts with FOXRED2. Post-translationally, glycosylated.

It is found in the secreted. Its subcellular location is the endoplasmic reticulum lumen. This Homo sapiens (Human) protein is Thioredoxin domain-containing protein 16.